Consider the following 124-residue polypeptide: Small ribosomal subunit protein uS12 (124 aa).

A 3-methylthioaspartic acid modification is found at aspartate 90.

Belongs to the universal ribosomal protein uS12 family. As to quaternary structure, part of the 30S ribosomal subunit. Contacts proteins S8 and S17. May interact with IF1 in the 30S initiation complex.

Functionally, with S4 and S5 plays an important role in translational accuracy. In terms of biological role, interacts with and stabilizes bases of the 16S rRNA that are involved in tRNA selection in the A site and with the mRNA backbone. Located at the interface of the 30S and 50S subunits, it traverses the body of the 30S subunit contacting proteins on the other side and probably holding the rRNA structure together. The combined cluster of proteins S8, S12 and S17 appears to hold together the shoulder and platform of the 30S subunit. In Wolbachia sp. subsp. Drosophila simulans (strain wRi), this protein is Small ribosomal subunit protein uS12.